Consider the following 922-residue polypeptide: Lysine-specific demethylase 7A (922 aa).

A PHD-type zinc finger spans residues 6–57 (PVYCVCRQPYDVSRFMIECDICKDWFHSSCVKVEEHQAADIDLYHCPNCEVL). The 157-residue stretch at 199 to 355 (FSDTKMADLV…MQLRCYEMEK (157 aa)) folds into the JmjC domain. A substrate-binding site is contributed by Thr248. 2 residues coordinate Fe cation: His251 and Asp253. Lys268 provides a ligand contact to substrate. His323 contributes to the Fe cation binding site. Disordered stretches follow at residues 445 to 490 (EEEG…TKTP), 565 to 607 (RSLY…TQKP), 622 to 711 (GSSE…EQEA), 754 to 773 (GKEH…HHVK), and 872 to 902 (LHPT…MATA). Basic residues predominate over residues 473-483 (HHSGRKARRLR). Residues 648-666 (ESESSGDDDDEEEEEEEER) are compositionally biased toward acidic residues. Basic and acidic residues-rich tracts occupy residues 667 to 683 (QEPI…RRLP) and 691 to 701 (PDHDSPQKREC).

It belongs to the JHDM1 histone demethylase family. JHDM1D subfamily. Requires Fe(2+) as cofactor.

The protein localises to the nucleus. Histone demethylase required for brain development. Specifically demethylates dimethylated 'Lys-9' and 'Lys-27' (H3K9me2 and H3K27me2, respectively) of histone H3 and monomethylated histone H4 'Lys-20' residue (H4K20Me1), thereby playing a central role in histone code. The sequence is that of Lysine-specific demethylase 7A (kdm7a) from Xenopus tropicalis (Western clawed frog).